Consider the following 451-residue polypeptide: Phosphoglucosamine mutase (451 aa).

The active-site Phosphoserine intermediate is serine 107. Mg(2+)-binding residues include serine 107, aspartate 246, aspartate 248, and aspartate 250. At serine 107 the chain carries Phosphoserine.

The protein belongs to the phosphohexose mutase family. Requires Mg(2+) as cofactor. Post-translationally, activated by phosphorylation.

It carries out the reaction alpha-D-glucosamine 1-phosphate = D-glucosamine 6-phosphate. Its function is as follows. Catalyzes the conversion of glucosamine-6-phosphate to glucosamine-1-phosphate. This chain is Phosphoglucosamine mutase, found in Burkholderia lata (strain ATCC 17760 / DSM 23089 / LMG 22485 / NCIMB 9086 / R18194 / 383).